The following is a 192-amino-acid chain: Ras-like GTP-binding protein O-RHO (192 aa).

Residue 12–19 (GDGACGKT) coordinates GTP. An Effector region motif is present at residues 34 to 42 (YVPTVFENY). GTP contacts are provided by residues 59–63 (DTAGQ) and 117–120 (NKKT). Residue Cys189 is modified to Cysteine methyl ester. The S-geranylgeranyl cysteine moiety is linked to residue Cys189. Residues 190-192 (LLL) constitute a propeptide, removed in mature form.

This sequence belongs to the small GTPase superfamily. Rho family.

It is found in the cell membrane. In Diplobatis ommata (Ocellated electric ray), this protein is Ras-like GTP-binding protein O-RHO.